A 74-amino-acid chain; its full sequence is MPMIDVPDNNAFDVAMRRFKRACEKAGILSKLRQIEYYEKPTSKRKRKRAAAVKRYAKKLQKEQEALERERTRY.

It belongs to the bacterial ribosomal protein bS21 family.

This is Small ribosomal subunit protein bS21 from Coxiella burnetii (strain Dugway 5J108-111).